We begin with the raw amino-acid sequence, 324 residues long: Olfactory receptor 2T2 (324 aa).

Residues M1–G26 lie on the Extracellular side of the membrane. A glycan (N-linked (GlcNAc...) asparagine) is linked at N9. The helical transmembrane segment at L27–I50 threads the bilayer. At H51–T58 the chain is on the cytoplasmic side. Residues P59–P80 form a helical membrane-spanning segment. Residues K81 to Q101 are Extracellular-facing. Residues C98 and C190 are joined by a disulfide bond. A helical membrane pass occupies residues I102 to Y121. Over D122 to R140 the chain is Cytoplasmic. The helical transmembrane segment at V141 to M159 threads the bilayer. The Extracellular segment spans residues L160–Y196. The helical transmembrane segment at E197 to T220 threads the bilayer. The Cytoplasmic segment spans residues H221–K237. The chain crosses the membrane as a helical span at residues A238–N260. Over V261–K273 the chain is Extracellular. A helical membrane pass occupies residues V274–L293. The Cytoplasmic segment spans residues R294–G324.

It belongs to the G-protein coupled receptor 1 family.

It localises to the cell membrane. Odorant receptor. The polypeptide is Olfactory receptor 2T2 (OR2T2) (Homo sapiens (Human)).